A 1581-amino-acid polypeptide reads, in one-letter code: Calmodulin-regulated spectrin-associated protein 1 (1581 aa).

Residues 215–330 enclose the Calponin-homology (CH) domain; that stretch reads ESPAHQKVRY…FIAELFWWFE (116 aa). Phosphoserine is present on residues Ser-216, Ser-370, Ser-374, and Ser-415. Residues 351-399 form a disordered region; it reads VLQQKSSRPPVPISNATKRSFLGSPAAMSPADQPPSTQPLAEGSHRYHL. A disordered region spans residues 424-470; it reads RQKQQKVSQTEEIPDQRHRSNSLTRVDGQPRGAIGAWPDKKNRPVSQ. The residue at position 511 (Thr-511) is a Phosphothreonine. A phosphoserine mark is found at Ser-550, Ser-553, Ser-560, Ser-572, and Ser-586. Positions 603-617 are enriched in basic and acidic residues; that stretch reads KQITTKEDERGEGRP. The interval 603-649 is disordered; it reads KQITTKEDERGEGRPRTIMAKRPSEGSQPMVRKKVSGGHGSRDLNRT. Phosphoserine occurs at positions 626, 718, 724, 734, and 736. Basic and acidic residues predominate over residues 765–785; that stretch reads ESAKLQEDMKVKEHEDKDDAS. Disordered stretches follow at residues 765–803 and 821–866; these read ESAK…SMSM and LNSC…SKDP. 2 stretches are compositionally biased toward low complexity: residues 792 to 803 and 826 to 837; these read LSTTSQLSSMSM and TKSSTSSSQKTT. Basic and acidic residues predominate over residues 853–865; the sequence is QKREQSPGRHSKD. The interval 867 to 888 is sufficient for interaction with SPTBN1; that stretch reads ASLLASELVQLHMQLEEKRRAI. Coiled-coil stretches lie at residues 869-905 and 1005-1037; these read LLAS…QRLK and DVNE…QEQL. The sufficient for interaction with calmodulin stretch occupies residues 899-918; that stretch reads SARQRLKLGKAAFLHVVKKG. Disordered regions lie at residues 1064-1143, 1225-1251, 1288-1315, and 1332-1428; these read FVEP…ELPE, PDED…PGVG, QLEA…EEEK, and QALE…DWET. Residue Ser-1069 is modified to Phosphoserine. Residues 1092–1103 are compositionally biased toward basic and acidic residues; the sequence is RPAELKVPKDRQ. Positions 1104 to 1132 are enriched in polar residues; it reads QGCSRSKTPTPSVETLPQSRSLPPSTHPR. Phosphoserine is present on Ser-1133. Basic and acidic residues predominate over residues 1225-1237; that stretch reads PDEDGEVVGHESS. The stretch at 1265–1336 forms a coiled coil; it reads AKKRAAFLLK…RRKQQQALEE (72 aa). The span at 1342 to 1353 shows a compositional bias: basic residues; it reads PKSKPKKPRPKS. Polar residues predominate over residues 1361-1372; that stretch reads SDSGTKCSSTHN. Residues 1373–1390 are compositionally biased toward low complexity; the sequence is LSQTHSGSSLSLASAATT. A phosphoserine mark is found at Ser-1378 and Ser-1407. The 134-residue stretch at 1443-1576 folds into the CKK domain; that stretch reads GPKLFKEPSS…QPKRPTVPKK (134 aa). Position 1516 is a phosphotyrosine (Tyr-1516).

Belongs to the CAMSAP1 family. In terms of assembly, interacts with spectrin via SPTBN1; the interaction is direct. Interacts with calmodulin; calcium-dependent it prevents interaction with spectrin. Expressed in the central nervous system.

The protein resides in the cytoplasm. Its subcellular location is the cytoskeleton. Key microtubule-organizing protein that specifically binds the minus-end of non-centrosomal microtubules and regulates their dynamics and organization. Specifically recognizes growing microtubule minus-ends and stabilizes microtubules. Acts on free microtubule minus-ends that are not capped by microtubule-nucleating proteins or other factors and protects microtubule minus-ends from depolymerization. In contrast to CAMSAP2 and CAMSAP3, tracks along the growing tips of minus-end microtubules without significantly affecting the polymerization rate: binds at the very tip of the microtubules minus-end and acts as a minus-end tracking protein (-TIP) that dissociates from microtubules after allowing tubulin incorporation. Through interaction with spectrin may regulate neurite outgrowth. The sequence is that of Calmodulin-regulated spectrin-associated protein 1 (Camsap1) from Mus musculus (Mouse).